The sequence spans 347 residues: Holliday junction branch migration complex subunit RuvB (347 aa).

Residues 1–186 (MKDENSINFL…FGITARFELY (186 aa)) are large ATPase domain (RuvB-L). ATP-binding positions include Leu25, Arg26, Gly67, Lys70, Thr71, Thr72, 133 to 135 (EDY), Arg176, Tyr186, and Arg223. Residue Thr71 coordinates Mg(2+). Positions 187 to 257 (SEIELVEIIK…IVAIGLEMLR (71 aa)) are small ATPAse domain (RuvB-S). Positions 260–347 (GEGLDEQDRN…NLNENQRVSF (88 aa)) are head domain (RuvB-H). DNA is bound by residues Arg315 and Arg320.

It belongs to the RuvB family. Homohexamer. Forms an RuvA(8)-RuvB(12)-Holliday junction (HJ) complex. HJ DNA is sandwiched between 2 RuvA tetramers; dsDNA enters through RuvA and exits via RuvB. An RuvB hexamer assembles on each DNA strand where it exits the tetramer. Each RuvB hexamer is contacted by two RuvA subunits (via domain III) on 2 adjacent RuvB subunits; this complex drives branch migration. In the full resolvosome a probable DNA-RuvA(4)-RuvB(12)-RuvC(2) complex forms which resolves the HJ.

Its subcellular location is the cytoplasm. The enzyme catalyses ATP + H2O = ADP + phosphate + H(+). The RuvA-RuvB-RuvC complex processes Holliday junction (HJ) DNA during genetic recombination and DNA repair, while the RuvA-RuvB complex plays an important role in the rescue of blocked DNA replication forks via replication fork reversal (RFR). RuvA specifically binds to HJ cruciform DNA, conferring on it an open structure. The RuvB hexamer acts as an ATP-dependent pump, pulling dsDNA into and through the RuvAB complex. RuvB forms 2 homohexamers on either side of HJ DNA bound by 1 or 2 RuvA tetramers; 4 subunits per hexamer contact DNA at a time. Coordinated motions by a converter formed by DNA-disengaged RuvB subunits stimulates ATP hydrolysis and nucleotide exchange. Immobilization of the converter enables RuvB to convert the ATP-contained energy into a lever motion, pulling 2 nucleotides of DNA out of the RuvA tetramer per ATP hydrolyzed, thus driving DNA branch migration. The RuvB motors rotate together with the DNA substrate, which together with the progressing nucleotide cycle form the mechanistic basis for DNA recombination by continuous HJ branch migration. Branch migration allows RuvC to scan DNA until it finds its consensus sequence, where it cleaves and resolves cruciform DNA. In Borreliella afzelii (strain PKo) (Borrelia afzelii), this protein is Holliday junction branch migration complex subunit RuvB.